We begin with the raw amino-acid sequence, 642 residues long: Zinc finger protein 398 (642 aa).

2 disordered regions span residues 1–24 (MAEA…QPLP) and 198–225 (EGEH…PGIS). Residues 143-214 (VAFDDVSIYF…DQAGPEESEI (72 aa)) form the KRAB domain. The span at 207–220 (AGPEESEIPTDPSE) shows a compositional bias: acidic residues. Residue Lys-265 forms a Glycyl lysine isopeptide (Lys-Gly) (interchain with G-Cter in SUMO2) linkage. Residues 343–364 (FSCHHCGKNLSQDMLLTHQCSH) form a C2H2-type 1; atypical zinc finger. Residues 370–392 (LPCAQCPKHFTPQADLSSTSQDH) form a C2H2-type 2; degenerate zinc finger. C2H2-type zinc fingers lie at residues 398-420 (PTCP…LRVH), 427-449 (FPCP…RRAH), 455-477 (FRCA…QRGH), 483-505 (FSCP…QMIH), 511-533 (YPCT…RRLH), 539-561 (FSCP…QRIH), and 567-590 (YPCS…RSGH). The interval 587–615 (RSGHNGGCGGDSDPSGQPPNPPGPLITGL) is disordered.

Belongs to the krueppel C2H2-type zinc-finger protein family.

The protein resides in the nucleus. In terms of biological role, functions as a transcriptional activator. The chain is Zinc finger protein 398 (ZNF398) from Homo sapiens (Human).